Reading from the N-terminus, the 416-residue chain is 3-oxoacyl-[acyl-carrier-protein] synthase 1 (416 aa).

One can recognise a Ketosynthase family 3 (KS3) domain in the interval 11–415 (FPSVVVTAVT…GHNVALAFGR (405 aa)). Active-site for beta-ketoacyl synthase activity residues include C171, H311, and H345. H311 and H345 together coordinate substrate.

The protein belongs to the thiolase-like superfamily. Beta-ketoacyl-ACP synthases family.

It is found in the cytoplasm. It catalyses the reaction an ultra-long-chain mono-unsaturated fatty acyl-[ACP] + malonyl-[ACP] + H(+) = a 3-oxo-ultra-long-chain mono-unsaturated fatty acyl-[ACP] + holo-[ACP] + CO2. Its pathway is lipid metabolism; mycolic acid biosynthesis. Its function is as follows. Part of the mycobacterial fatty acid elongation system FAS-II, which is involved in mycolic acid biosynthesis. Catalyzes the elongation of long chain acyl-ACP substrates by the addition of two carbons from malonyl-ACP to an acyl acceptor. Involved in the initial extension of the mycolate chain and forms monounsaturated fatty acids that averaged 40 carbons in length. The protein is 3-oxoacyl-[acyl-carrier-protein] synthase 1 (kasA) of Mycobacterium tuberculosis (strain ATCC 35801 / TMC 107 / Erdman).